The sequence spans 113 residues: Large ribosomal subunit protein uL22 (113 aa).

It belongs to the universal ribosomal protein uL22 family. In terms of assembly, part of the 50S ribosomal subunit.

In terms of biological role, this protein binds specifically to 23S rRNA; its binding is stimulated by other ribosomal proteins, e.g. L4, L17, and L20. It is important during the early stages of 50S assembly. It makes multiple contacts with different domains of the 23S rRNA in the assembled 50S subunit and ribosome. Functionally, the globular domain of the protein is located near the polypeptide exit tunnel on the outside of the subunit, while an extended beta-hairpin is found that lines the wall of the exit tunnel in the center of the 70S ribosome. The sequence is that of Large ribosomal subunit protein uL22 from Symbiobacterium thermophilum (strain DSM 24528 / JCM 14929 / IAM 14863 / T).